Consider the following 101-residue polypeptide: Small ribosomal subunit protein uS14 (101 aa).

The tract at residues Ser50–Pro70 is disordered. Positions Arg59 to Gly68 are enriched in basic residues.

This sequence belongs to the universal ribosomal protein uS14 family. In terms of assembly, part of the 30S ribosomal subunit. Contacts proteins S3 and S10.

Functionally, binds 16S rRNA, required for the assembly of 30S particles and may also be responsible for determining the conformation of the 16S rRNA at the A site. This chain is Small ribosomal subunit protein uS14, found in Erwinia tasmaniensis (strain DSM 17950 / CFBP 7177 / CIP 109463 / NCPPB 4357 / Et1/99).